A 105-amino-acid chain; its full sequence is uncharacterized protein (105 aa).

Position 2 is an N-acetylserine (Ser-2).

This is an uncharacterized protein from Saccharomyces cerevisiae (strain ATCC 204508 / S288c) (Baker's yeast).